The primary structure comprises 1642 residues: Cortactin-binding protein 2 (1642 aa).

Disordered stretches follow at residues 1 to 27 (MATD…AEAA), 203 to 222 (KKKT…RSTE), 366 to 433 (IGAS…HPGL), 446 to 471 (GSNA…SPTS), and 491 to 611 (RFTS…PSID). A coiled-coil region spans residues 119–276 (RKMQERMSTQ…EQLKRGTDSK (158 aa)). A compositionally biased stretch (polar residues) spans 385–394 (GPSTGSTADL). Over residues 395–407 (TSSPTPVPSTVSP) the composition is skewed to low complexity. An Asymmetric dimethylarginine modification is found at R491. Residues 497–506 (AGAPPRPGAP) are compositionally biased toward pro residues. Over residues 576–586 (TVASPPSTLPQ) the composition is skewed to polar residues. ANK repeat units lie at residues 702–732 (GRPT…DINY), 736–765 (DGHS…QVNA), 769–798 (NGFT…NINH), 802–831 (GGQT…DRSV), 835–864 (DGWT…PAHG), and 904–934 (EGWT…EPER). The disordered stretch occupies residues 1441-1469 (SGAWRKVSTSPRKKSGRFSSPTWNKPDLS). S1513 bears the Phosphoserine mark. A disordered region spans residues 1545 to 1642 (LRRFDSSGNN…NSRDLEPTQK (98 aa)). Polar residues-rich tracts occupy residues 1552–1563 (GNNPVFSATVNN) and 1571–1588 (KEVS…SNSK). Low complexity predominate over residues 1613–1627 (SQNTKRSSSSSNTRQ).

As to quaternary structure, interacts with CTTN/cortactin SH3 domain. Interacts with STRN, STRN4/zinedin and MOB4/phocein; this interactions mediate the association with the STRIPAK core complex and may regulate dendritic spine distribution of the STRIPAK complex in hippocampal neurons. Activation of glutamate receptors weakens the interaction with STRN and STRN4.

It localises to the cytoplasm. The protein resides in the cell cortex. It is found in the cell projection. Its subcellular location is the dendritic spine. Its function is as follows. Regulates the dendritic spine distribution of CTTN/cortactin in hippocampal neurons, and thus controls dendritic spinogenesis and dendritic spine maintenance. Associates with the striatin-interacting phosphatase and kinase (STRIPAK) core complex to regulate dendritic spine distribution of the STRIPAK complex in hippocampal neurons. The polypeptide is Cortactin-binding protein 2 (CTTNBP2) (Muntiacus muntjak (Barking deer)).